The primary structure comprises 220 residues: MSETQRAFVKRITHETQVQIALALNGGPLEIGQSILGGAKTTVAHQASSSQVINVQTGVGFLDHMIHALAKHSGWSLIVECVGDLHIDDHHTTEDCGLALGQALREAIGQVRGVKRFGTGFAPLDEALSRAVVDLSNRPYAVVDLGLRREKIGDLSTEMIPHFLQSFAESARVTLHVDCLRGTNDHHRSESAFKAVAVALRDALTRTGTDDVPSTKGVLM.

This sequence belongs to the imidazoleglycerol-phosphate dehydratase family.

The catalysed reaction is D-erythro-1-(imidazol-4-yl)glycerol 3-phosphate = 3-(imidazol-4-yl)-2-oxopropyl phosphate + H2O. The protein operates within amino-acid biosynthesis; L-histidine biosynthesis; L-histidine from 5-phospho-alpha-D-ribose 1-diphosphate: step 6/9. This Eremothecium gossypii (strain ATCC 10895 / CBS 109.51 / FGSC 9923 / NRRL Y-1056) (Yeast) protein is Imidazoleglycerol-phosphate dehydratase (HIS3).